Consider the following 330-residue polypeptide: Aspartate--ammonia ligase (330 aa).

It belongs to the class-II aminoacyl-tRNA synthetase family. AsnA subfamily.

It localises to the cytoplasm. The enzyme catalyses L-aspartate + NH4(+) + ATP = L-asparagine + AMP + diphosphate + H(+). The protein operates within amino-acid biosynthesis; L-asparagine biosynthesis; L-asparagine from L-aspartate (ammonia route): step 1/1. The chain is Aspartate--ammonia ligase from Escherichia coli (strain SMS-3-5 / SECEC).